The primary structure comprises 467 residues: Transcription factor fos-1 (467 aa).

The span at 1 to 22 shows a compositional bias: low complexity; that stretch reads MFEQPSSTTNTTTSSGSGSDSN. Disordered stretches follow at residues 1–38 and 139–179; these read MFEQ…QAHP and QYST…AAAR. Residues 163 to 226 enclose the bZIP domain; it reads DDKRLKRRQR…NSLKNYLETH (64 aa). Residues 165 to 205 are basic motif; the sequence is KRLKRRQRNKEAAARCRQRRIDLMKELQDQVNDFKNSNDKK. The leucine-zipper stretch occupies residues 212 to 219; the sequence is IRNKLNSL. Disordered stretches follow at residues 266–291 and 395–467; these read RADS…PVED and QPIT…LRPL. Residues 273–286 show a composition bias toward low complexity; that stretch reads SIRSGHSSSSSEQH. The span at 434–454 shows a compositional bias: polar residues; it reads SSNTGLTPSGQPTMNFVSTPT. Thr440, Thr452, and Thr454 each carry phosphothreonine.

Belongs to the bZIP family. Fos subfamily. As to quaternary structure, homodimer. Heterodimer; with jun-1. Interacts with kgb-1 and hda-1. May be phosphorylated by kgb-1. Phosphorylation at Thr-440 increases sensitivity to heavy metal stress. Phosphorylation inhibits homodimer formation, and promotes association with target promoters. Expressed in anchor cells. Isoform a is expressed in somatic gonad cells that neighbor anchor cells. Isoform b is expressed in vulval cells, the uterine cells that neighbor anchor cells and the spermatheca.

It is found in the nucleus. Developmentally regulated transcription factor which binds and recognizes the enhancer DNA sequence 5'-TGA[CG]TCA-3'. In terms of biological role, plays a role the development of the reproductive system, controlling events including anchor cell (AC) fusion and invasion. Regulates downstream transcriptional targets, including zmp-1, cdh-3, him-4 and mig10b, to promote the removal of the gonadal basement membrane during AC invasion. Regulates aff-1 expression to promote AC fusion. With jun-1 regulates egl-1 and lin-12 expression to allow uterine cell specification and development. Functionally, required for ovulation. Controls plc-1 expression in the spermatheca to regulate spermathecal valve dilation. Acts with hda-1 as a downstream repressor of the kgb-1 mediated stress response pathway that transcriptionally represses genes involved in the response to heavy metals, such as kreg-1. This chain is Transcription factor fos-1, found in Caenorhabditis elegans.